A 559-amino-acid polypeptide reads, in one-letter code: Methionine--tRNA ligase (559 aa).

The 'HIGH' region motif lies at 10 to 20 (PYINAVPHLGT). Zn(2+) is bound by residues Cys141, Cys144, Cys154, and Cys157. Positions 331 to 335 (KFSKS) match the 'KMSKS' region motif. Residue Lys334 participates in ATP binding.

The protein belongs to the class-I aminoacyl-tRNA synthetase family. MetG type 1 subfamily. The cofactor is Zn(2+).

Its subcellular location is the cytoplasm. It catalyses the reaction tRNA(Met) + L-methionine + ATP = L-methionyl-tRNA(Met) + AMP + diphosphate. Functionally, is required not only for elongation of protein synthesis but also for the initiation of all mRNA translation through initiator tRNA(fMet) aminoacylation. This chain is Methionine--tRNA ligase, found in Korarchaeum cryptofilum (strain OPF8).